Here is a 447-residue protein sequence, read N- to C-terminus: tRNA-2-methylthio-N(6)-dimethylallyladenosine synthase (447 aa).

The 117-residue stretch at 4 to 120 folds into the MTTase N-terminal domain; that stretch reads RSFFIKTYGC…INELLERSRT (117 aa). Residues cysteine 13, cysteine 49, cysteine 83, cysteine 161, cysteine 165, and cysteine 168 each coordinate [4Fe-4S] cluster. The Radical SAM core domain maps to 147–382; that stretch reads HEGEFRKFVT…QARQDEIGLE (236 aa). The 62-residue stretch at 385 to 446 folds into the TRAM domain; the sequence is QEYIGTTQEV…QHSLRGSIVE (62 aa).

Belongs to the methylthiotransferase family. MiaB subfamily. As to quaternary structure, monomer. [4Fe-4S] cluster serves as cofactor.

It is found in the cytoplasm. The catalysed reaction is N(6)-dimethylallyladenosine(37) in tRNA + (sulfur carrier)-SH + AH2 + 2 S-adenosyl-L-methionine = 2-methylsulfanyl-N(6)-dimethylallyladenosine(37) in tRNA + (sulfur carrier)-H + 5'-deoxyadenosine + L-methionine + A + S-adenosyl-L-homocysteine + 2 H(+). Functionally, catalyzes the methylthiolation of N6-(dimethylallyl)adenosine (i(6)A), leading to the formation of 2-methylthio-N6-(dimethylallyl)adenosine (ms(2)i(6)A) at position 37 in tRNAs that read codons beginning with uridine. The sequence is that of tRNA-2-methylthio-N(6)-dimethylallyladenosine synthase from Desulfotalea psychrophila (strain LSv54 / DSM 12343).